Reading from the N-terminus, the 468-residue chain is uncharacterized protein (468 aa).

The next 6 helical transmembrane spans lie at 59-79 (IPIV…ALFI), 135-155 (TWIN…LLLV), 215-235 (VFPF…LSIL), 297-317 (THCC…MVLV), 348-368 (HFIP…LVSY), and 385-405 (VFTV…IILF).

The protein localises to the membrane. This is an uncharacterized protein from Caenorhabditis elegans.